A 360-amino-acid chain; its full sequence is Probable butyrate kinase (360 aa).

Belongs to the acetokinase family.

The protein resides in the cytoplasm. The enzyme catalyses butanoate + ATP = butanoyl phosphate + ADP. This Enterococcus faecalis (strain ATCC 700802 / V583) protein is Probable butyrate kinase.